The primary structure comprises 184 residues: Threonylcarbamoyl-AMP synthase (184 aa).

In terms of domain architecture, YrdC-like spans 3-184; it reads AWFIQKAVSV…DAATGAILRQ (182 aa).

This sequence belongs to the SUA5 family. TsaC subfamily.

The protein resides in the cytoplasm. It carries out the reaction L-threonine + hydrogencarbonate + ATP = L-threonylcarbamoyladenylate + diphosphate + H2O. Functionally, required for the formation of a threonylcarbamoyl group on adenosine at position 37 (t(6)A37) in tRNAs that read codons beginning with adenine. Catalyzes the conversion of L-threonine, HCO(3)(-)/CO(2) and ATP to give threonylcarbamoyl-AMP (TC-AMP) as the acyladenylate intermediate, with the release of diphosphate. The chain is Threonylcarbamoyl-AMP synthase from Hahella chejuensis (strain KCTC 2396).